The primary structure comprises 157 residues: MSRRHAAEKKVIPADPIYGSVTLERFINKVMMHGKKSIARKIVYSALERFSKKIGAENVLEAFKEALENAKPLLEVRSRRVGGATYQVPVEVAAGRRDCLAMKWIINNARNKPGKCMEVGLATELIDCFNKQGATIKKREDTHRMAEANKAFAHYKW.

Belongs to the universal ribosomal protein uS7 family. Part of the 30S ribosomal subunit. Contacts proteins S9 and S11.

Its function is as follows. One of the primary rRNA binding proteins, it binds directly to 16S rRNA where it nucleates assembly of the head domain of the 30S subunit. Is located at the subunit interface close to the decoding center, probably blocks exit of the E-site tRNA. The polypeptide is Small ribosomal subunit protein uS7 (Chlamydia caviae (strain ATCC VR-813 / DSM 19441 / 03DC25 / GPIC) (Chlamydophila caviae)).